Here is a 66-residue protein sequence, read N- to C-terminus: ATP synthase F(0) complex subunit 8 (66 aa).

A helical membrane pass occupies residues 8-24 (TWLTMILSMFLVLFIIF). N6-acetyllysine; alternate is present on lysine 54. Position 54 is an N6-succinyllysine; alternate (lysine 54). At lysine 57 the chain carries N6-acetyllysine.

Belongs to the ATPase protein 8 family. As to quaternary structure, component of the ATP synthase complex composed at least of ATP5F1A/subunit alpha, ATP5F1B/subunit beta, ATP5MC1/subunit c (homooctomer), MT-ATP6/subunit a, MT-ATP8/subunit 8, ATP5ME/subunit e, ATP5MF/subunit f, ATP5MG/subunit g, ATP5MK/subunit k, ATP5MJ/subunit j, ATP5F1C/subunit gamma, ATP5F1D/subunit delta, ATP5F1E/subunit epsilon, ATP5PF/subunit F6, ATP5PB/subunit b, ATP5PD/subunit d, ATP5PO/subunit OSCP. ATP synthase complex consists of a soluble F(1) head domain (subunits alpha(3) and beta(3)) - the catalytic core - and a membrane F(0) domain - the membrane proton channel (subunits c, a, 8, e, f, g, k and j). These two domains are linked by a central stalk (subunits gamma, delta, and epsilon) rotating inside the F1 region and a stationary peripheral stalk (subunits F6, b, d, and OSCP). Interacts with PRICKLE3.

The protein resides in the mitochondrion membrane. In terms of biological role, subunit 8, of the mitochondrial membrane ATP synthase complex (F(1)F(0) ATP synthase or Complex V) that produces ATP from ADP in the presence of a proton gradient across the membrane which is generated by electron transport complexes of the respiratory chain. ATP synthase complex consist of a soluble F(1) head domain - the catalytic core - and a membrane F(1) domain - the membrane proton channel. These two domains are linked by a central stalk rotating inside the F(1) region and a stationary peripheral stalk. During catalysis, ATP synthesis in the catalytic domain of F(1) is coupled via a rotary mechanism of the central stalk subunits to proton translocation. In vivo, can only synthesize ATP although its ATP hydrolase activity can be activated artificially in vitro. Part of the complex F(0) domain. The protein is ATP synthase F(0) complex subunit 8 of Ovis aries (Sheep).